Consider the following 264-residue polypeptide: Accessory gland-specific peptide 26Aa (264 aa).

An N-terminal signal peptide occupies residues 1–18; sequence MNQILLCSPILLLLFTVA. Positions 1–138 are sufficient for promoting ovulation when expressed in females; sequence MNQILLCSPI…LQQRLLTEQN (138 aa). 4 N-linked (GlcNAc...) asparagine glycosylation sites follow: N88, N122, N138, and N145. The segment at 189-219 is disordered; the sequence is LQNTRKSTKPCKKRSSKDSAPPAANQFQEAN. The span at 194 to 203 shows a compositional bias: basic residues; it reads KSTKPCKKRS. A necessary and sufficient for homodimerization region spans residues 219 to 264; that stretch reads NVRNTYRNKYLTLLKELSQKINNEIAKVATDVPTETNPSQGNLPTL.

In terms of assembly, homodimer. May form a homodimer. Glycosylation. Post-translationally, undergoes several cleavages as it is secreted and is further processed in the recipient female. The precursor molecule is proteolytically cleaved by the seminal metalloprotease Semp1 at Lys-48 to produce CP1-N and CP1-C. In terms of processing, cleaved at Lys-67 by Semp1 to generate CP2-N and CP2-C. Cleavage appears to take place in the mated female genital tract. Cleaved at Lys-117 by Semp1 to generate CP3-N and CP3-C. Cleavage appears to take place in the mated female genital tract. Produced in the male accessory glands and secreted into seminal fluid (at protein level). Detected in the main cells and secondary cells of the accessory glands of 1 day old males (at protein level). In 5 day old males, confined to the secondary cells and only reappears in the main cells after mating (at protein level). Produced in adult males 3-4 hr after eclosion, levels increase reaching a peak at day 3-5 which is maintained until at least day 10 of adulthood (at protein level). In unmated male adults, levels are maintained for the first 6 days of adulthood and then gradually decrease for at least the next 8 days. In mated females, detected in the genital tract 3 minutes after the start of mating (ASM) and is secreted into the female hemolymph via the posterior vaginal wall 5 minutes ASM (at protein level).

It is found in the secreted. The protein resides in the cytoplasm. Functionally, male seminal protein which enhances ovulation in female Drosophila by stimulating the release of oocytes by the ovary following mating. Acts by increasing octopamine (OA) neuronal signaling in the female genital tract leading to the postmating relaxation of the oviduct muscles. This activation of the OA signaling pathway is likely to indirectly contribute to the mating-dependent increase in the number of OA synaptic sites in the female reproductive tract. In terms of biological role, male seminal peptide which is able to enhance ovulation in female Drosophila. This Drosophila melanogaster (Fruit fly) protein is Accessory gland-specific peptide 26Aa.